Reading from the N-terminus, the 212-residue chain is Adenylate kinase (212 aa).

ATP is bound at residue 10–15 (GAGKGT). An NMP region spans residues 30–59 (STGDMFRAAMANQTEMGRLAKSYIDKGELV). Residues threonine 31, arginine 36, 57–59 (ELV), 86–89 (GYPR), and glutamine 93 contribute to the AMP site. The segment at 127–159 (GRIINRKTGETFHKVFNPPVDYKEEDYYQREDD) is LID. Residues arginine 128 and 137–138 (TF) contribute to the ATP site. AMP is bound by residues arginine 156 and arginine 167. Glutamine 195 provides a ligand contact to ATP.

The protein belongs to the adenylate kinase family. As to quaternary structure, monomer.

The protein localises to the cytoplasm. It catalyses the reaction AMP + ATP = 2 ADP. The protein operates within purine metabolism; AMP biosynthesis via salvage pathway; AMP from ADP: step 1/1. In terms of biological role, catalyzes the reversible transfer of the terminal phosphate group between ATP and AMP. Plays an important role in cellular energy homeostasis and in adenine nucleotide metabolism. In Streptococcus pyogenes serotype M5 (strain Manfredo), this protein is Adenylate kinase.